The following is a 583-amino-acid chain: Vivapain-1 (583 aa).

Topologically, residues 1 to 34 (MAQDIKIMNLTKSSLEALNRNQMLSKKSSRKILK) are cytoplasmic. Positions 1 to 338 (MAQDIKIMNL…SSSGANLLAD (338 aa)) are cleaved as a propeptide — activation peptide. A helical; Signal-anchor for type II membrane protein transmembrane segment spans residues 35–55 (ICMYAILTFAMCGVVLICLTA). Over 56 to 583 (MSNSDGSLTQ…IGVEVFYPIL (528 aa)) the chain is Lumenal. The segment covering 62-82 (SLTQSGSHNQSGSLKGLSSTP) has biased composition (polar residues). Disordered stretches follow at residues 62–83 (SLTQ…STPG) and 104–125 (PHGN…ALPN). Residue asparagine 70 is glycosylated (N-linked (GlcNAc...) asparagine). Residues 106-119 (GNRDPTGDDVEKPA) show a composition bias toward basic and acidic residues. Residues asparagine 195 and asparagine 272 are each glycosylated (N-linked (GlcNAc...) asparagine). Cystine bridges form between cysteine 360-cysteine 402, cysteine 395-cysteine 435, and cysteine 420-cysteine 440. The active site involves cysteine 363. Asparagine 381 carries an N-linked (GlcNAc...) asparagine glycan. N-linked (GlcNAc...) asparagine glycosylation is found at asparagine 486 and asparagine 494. Cysteine 489 and cysteine 572 form a disulfide bridge. Catalysis depends on residues histidine 495 and asparagine 547.

This sequence belongs to the peptidase C1 family.

Its subcellular location is the membrane. Functionally, cysteine protease. The chain is Vivapain-1 from Plasmodium vivax (strain Salvador I).